The chain runs to 271 residues: Glutamate racemase (271 aa).

Substrate is bound by residues 12–13 and 44–45; these read DS and YG. The active-site Proton donor/acceptor is the Cys-75. 76–77 contacts substrate; sequence NT. Cys-185 (proton donor/acceptor) is an active-site residue. Residue 186 to 187 coordinates substrate; that stretch reads TH.

The protein belongs to the aspartate/glutamate racemases family.

The enzyme catalyses L-glutamate = D-glutamate. Its pathway is cell wall biogenesis; peptidoglycan biosynthesis. In terms of biological role, provides the (R)-glutamate required for cell wall biosynthesis. This is Glutamate racemase from Methylococcus capsulatus (strain ATCC 33009 / NCIMB 11132 / Bath).